The chain runs to 106 residues: Immunoglobulin lambda constant 3 (106 aa).

The region spanning 7–101 (PSVTLFPPSS…EGSTVEKTVA (95 aa)) is the Ig-like domain. The cysteines at positions 28 and 87 are disulfide-linked.

Immunoglobulins are composed of two identical heavy chains and two identical light chains; disulfide-linked.

The protein resides in the secreted. The protein localises to the cell membrane. Constant region of immunoglobulin light chains. Immunoglobulins, also known as antibodies, are membrane-bound or secreted glycoproteins produced by B lymphocytes. In the recognition phase of humoral immunity, the membrane-bound immunoglobulins serve as receptors which, upon binding of a specific antigen, trigger the clonal expansion and differentiation of B lymphocytes into immunoglobulins-secreting plasma cells. Secreted immunoglobulins mediate the effector phase of humoral immunity, which results in the elimination of bound antigens. The antigen binding site is formed by the variable domain of one heavy chain, together with that of its associated light chain. Thus, each immunoglobulin has two antigen binding sites with remarkable affinity for a particular antigen. The variable domains are assembled by a process called V-(D)-J rearrangement and can then be subjected to somatic hypermutations which, after exposure to antigen and selection, allow affinity maturation for a particular antigen. In Homo sapiens (Human), this protein is Immunoglobulin lambda constant 3.